The primary structure comprises 156 residues: Methylated-DNA--protein-cysteine methyltransferase (156 aa).

The Nucleophile; methyl group acceptor role is filled by cysteine 126.

The protein belongs to the MGMT family.

The protein resides in the cytoplasm. The enzyme catalyses a 6-O-methyl-2'-deoxyguanosine in DNA + L-cysteinyl-[protein] = S-methyl-L-cysteinyl-[protein] + a 2'-deoxyguanosine in DNA. The catalysed reaction is a 4-O-methyl-thymidine in DNA + L-cysteinyl-[protein] = a thymidine in DNA + S-methyl-L-cysteinyl-[protein]. In terms of biological role, involved in the cellular defense against the biological effects of O6-methylguanine (O6-MeG) and O4-methylthymine (O4-MeT) in DNA. Repairs the methylated nucleobase in DNA by stoichiometrically transferring the methyl group to a cysteine residue in the enzyme. This is a suicide reaction: the enzyme is irreversibly inactivated. This is Methylated-DNA--protein-cysteine methyltransferase from Methanosarcina acetivorans (strain ATCC 35395 / DSM 2834 / JCM 12185 / C2A).